The primary structure comprises 154 residues: Transcriptional repressor NrdR (154 aa).

A zinc finger spans residues 3–34 (CPFCGANDTKVIDSRLVAEGEQVRRRRECLAC). The 91-residue stretch at 49 to 139 (PRLIKQDGSR…VYRRFQDLNE (91 aa)) folds into the ATP-cone domain.

Belongs to the NrdR family. The cofactor is Zn(2+).

Functionally, negatively regulates transcription of bacterial ribonucleotide reductase nrd genes and operons by binding to NrdR-boxes. The sequence is that of Transcriptional repressor NrdR from Pseudomonas syringae pv. tomato (strain ATCC BAA-871 / DC3000).